A 528-amino-acid polypeptide reads, in one-letter code: Butyrophilin subfamily 2 member A2 (528 aa).

Residues 1 to 29 (MESAAALHFSRPASLLLLLLLSLCALVSA) form the signal peptide. Residues 30 to 249 (QVTVVGPTDP…SFMPSVSPCA (220 aa)) are Extracellular-facing. Positions 31-142 (VTVVGPTDPI…SYDEAILHLI (112 aa)) constitute an Ig-like V-type domain. N-linked (GlcNAc...) asparagine glycosylation is found at asparagine 47, asparagine 115, and asparagine 121. The cysteines at positions 52 and 126 are disulfide-linked. Positions 150–232 (PLIEMRGHED…NNTLLSQKKE (83 aa)) constitute an Ig-like C2-type domain. Residues 250-270 (VALPIVVVILMILFAVCMYWI) form a helical membrane-spanning segment. Residues 270–320 (INKLQKEKKILSGEKEFERETREIAVKELEKERVQKEEELQVKEKLQEELR) are a coiled coil. At 271–528 (NKLQKEKKIL…LHRVGTHQSL (258 aa)) the chain is on the cytoplasmic side. A B30.2/SPRY domain is found at 311 to 507 (VKEKLQEELR…IFICPALTGA (197 aa)).

It belongs to the immunoglobulin superfamily. BTN/MOG family. In terms of processing, N-glycosylated.

Its subcellular location is the membrane. Inhibits the proliferation of CD4 and CD8 T-cells activated by anti-CD3 antibodies, T-cell metabolism and IL2 and IFNG secretion. The chain is Butyrophilin subfamily 2 member A2 (BTN2A2) from Pongo abelii (Sumatran orangutan).